The sequence spans 146 residues: Peptide methionine sulfoxide reductase MsrB (146 aa).

In terms of domain architecture, MsrB spans 6 to 129 (SAEAIAKLSA…NSASLRFVPK (124 aa)). The active-site Nucleophile is the C118.

This sequence belongs to the MsrB Met sulfoxide reductase family.

It catalyses the reaction L-methionyl-[protein] + [thioredoxin]-disulfide + H2O = L-methionyl-(R)-S-oxide-[protein] + [thioredoxin]-dithiol. This is Peptide methionine sulfoxide reductase MsrB from Brucella melitensis biotype 1 (strain ATCC 23456 / CCUG 17765 / NCTC 10094 / 16M).